The primary structure comprises 82 residues: Progonadoliberin-3 (82 aa).

A signal peptide spans 1–23 (MDLSSKTVVQVVMLALIAQVTFS). Gln24 carries the pyrrolidone carboxylic acid modification. The residue at position 33 (Gly33) is a Glycine amide.

Belongs to the GnRH family.

Its subcellular location is the secreted. Its function is as follows. Stimulates the secretion of gonadotropins. The sequence is that of Progonadoliberin-3 (gnrh3) from Oncorhynchus masou (Cherry salmon).